The following is a 222-amino-acid chain: Sigma non-opioid intracellular receptor 1 (222 aa).

Over 1–6 (MSLIRT) the chain is Lumenal. A helical membrane pass occupies residues 7–29 (ILKLVVVVGFLSLTVQFIRHWMA). Residues 30-222 (NKQYVFTKEE…STFLTESGVL (193 aa)) are Cytoplasmic-facing. Residues 97-104 (SLTEYVLL) are important for ligand-binding. The tract at residues 175-222 (FIPSTLGFALADTMFSTQDFLTLFYTARVYVKGMILEASTFLTESGVL) is C-terminal hydrophobic region.

It belongs to the ERG2 family. Homotrimer.

It localises to the nucleus inner membrane. It is found in the nucleus outer membrane. Its subcellular location is the nucleus envelope. The protein resides in the cytoplasmic vesicle. The protein localises to the endoplasmic reticulum membrane. It localises to the membrane. Functionally, may function in lipid transport from the endoplasmic reticulum and be involved in a wide array of cellular functions probably through regulation of the biogenesis of lipid microdomains at the plasma membrane. May regulate calcium efflux at the endoplasmic reticulum. The polypeptide is Sigma non-opioid intracellular receptor 1 (sigmar1) (Danio rerio (Zebrafish)).